We begin with the raw amino-acid sequence, 302 residues long: Sulfate adenylyltransferase subunit 2 (302 aa).

This sequence belongs to the PAPS reductase family. CysD subfamily. In terms of assembly, heterodimer composed of CysD, the smaller subunit, and CysN.

The catalysed reaction is sulfate + ATP + H(+) = adenosine 5'-phosphosulfate + diphosphate. The protein operates within sulfur metabolism; hydrogen sulfide biosynthesis; sulfite from sulfate: step 1/3. With CysN forms the ATP sulfurylase (ATPS) that catalyzes the adenylation of sulfate producing adenosine 5'-phosphosulfate (APS) and diphosphate, the first enzymatic step in sulfur assimilation pathway. APS synthesis involves the formation of a high-energy phosphoric-sulfuric acid anhydride bond driven by GTP hydrolysis by CysN coupled to ATP hydrolysis by CysD. The chain is Sulfate adenylyltransferase subunit 2 from Photorhabdus laumondii subsp. laumondii (strain DSM 15139 / CIP 105565 / TT01) (Photorhabdus luminescens subsp. laumondii).